We begin with the raw amino-acid sequence, 136 residues long: ATP synthase epsilon chain (136 aa).

The protein belongs to the ATPase epsilon chain family. F-type ATPases have 2 components, CF(1) - the catalytic core - and CF(0) - the membrane proton channel. CF(1) has five subunits: alpha(3), beta(3), gamma(1), delta(1), epsilon(1). CF(0) has three main subunits: a, b and c.

The protein localises to the cell membrane. Produces ATP from ADP in the presence of a proton gradient across the membrane. The protein is ATP synthase epsilon chain of Herpetosiphon aurantiacus (strain ATCC 23779 / DSM 785 / 114-95).